Here is a 166-residue protein sequence, read N- to C-terminus: NAD(P)H-quinone oxidoreductase subunit I, chloroplastic (166 aa).

2 4Fe-4S ferredoxin-type domains span residues 55-84 (GRIH…VDWK) and 95-124 (LNYS…MTEE). [4Fe-4S] cluster contacts are provided by Cys-64, Cys-67, Cys-70, Cys-74, Cys-104, Cys-107, Cys-110, and Cys-114.

Belongs to the complex I 23 kDa subunit family. In terms of assembly, NDH is composed of at least 16 different subunits, 5 of which are encoded in the nucleus. The cofactor is [4Fe-4S] cluster.

The protein localises to the plastid. Its subcellular location is the chloroplast thylakoid membrane. It catalyses the reaction a plastoquinone + NADH + (n+1) H(+)(in) = a plastoquinol + NAD(+) + n H(+)(out). The enzyme catalyses a plastoquinone + NADPH + (n+1) H(+)(in) = a plastoquinol + NADP(+) + n H(+)(out). Its function is as follows. NDH shuttles electrons from NAD(P)H:plastoquinone, via FMN and iron-sulfur (Fe-S) centers, to quinones in the photosynthetic chain and possibly in a chloroplast respiratory chain. The immediate electron acceptor for the enzyme in this species is believed to be plastoquinone. Couples the redox reaction to proton translocation, and thus conserves the redox energy in a proton gradient. The chain is NAD(P)H-quinone oxidoreductase subunit I, chloroplastic from Pericome caudata (Mountain tail-leaf).